The following is a 57-amino-acid chain: Protein translocase subunit SecE (57 aa).

Residues L30 to M50 traverse the membrane as a helical segment.

Belongs to the SecE/SEC61-gamma family. Component of the Sec protein translocase complex. Heterotrimer consisting of SecY (alpha), SecG (beta) and SecE (gamma) subunits. The heterotrimers can form oligomers, although 1 heterotrimer is thought to be able to translocate proteins. Interacts with the ribosome. May interact with SecDF, and other proteins may be involved.

The protein localises to the cell membrane. Essential subunit of the Sec protein translocation channel SecYEG. Clamps together the 2 halves of SecY. May contact the channel plug during translocation. The sequence is that of Protein translocase subunit SecE from Haloquadratum walsbyi (strain DSM 16790 / HBSQ001).